The primary structure comprises 526 residues: Phenylacetaldehyde oxime monooxygenase CYP71AN24 (526 aa).

Residues 22–42 (SFNIFLVPILCLSIFILFSLT) traverse the membrane as a helical segment. C465 is a heme binding site.

This sequence belongs to the cytochrome P450 family. Heme serves as cofactor. Expressed in seedlings and leaves.

It is found in the membrane. The enzyme catalyses (E)-phenylacetaldehyde oxime + reduced [NADPH--hemoprotein reductase] + O2 = (R)-mandelonitrile + oxidized [NADPH--hemoprotein reductase] + 2 H2O + H(+). It carries out the reaction phenylacetonitrile + reduced [NADPH--hemoprotein reductase] + O2 = (R)-mandelonitrile + oxidized [NADPH--hemoprotein reductase] + H2O + H(+). Functionally, involved in L-phenylalanine-derived cyanogenic glycoside biosynthesis, including prunasin and amygdalin defensive agents. Catalyzes the conversion of phenylacetaldoxime (PAOx) and phenylacetonitrile (PAN) into mandelonitrile (MAN). To a lower extent, can convert various aromatic aldoximes and nitriles; mediates the transformation of 4-hydroxyphenylacetaldoxime, 4-hydroxyphenylacetonitrile, indole-3-acetal-doxime and indole-3-acetonitrile into the corresponding hydroxynitriles, but cannot use the aliphatic compounds 2-methylpropanaloxime and 2-methylpropanenitrile as substrates. This Prunus mume (Japanese apricot) protein is Phenylacetaldehyde oxime monooxygenase CYP71AN24.